The sequence spans 373 residues: Cystathionine gamma-synthase/O-acetylhomoserine (thiol)-lyase (373 aa).

Lysine 197 bears the N6-(pyridoxal phosphate)lysine mark.

This sequence belongs to the trans-sulfuration enzymes family. As to quaternary structure, homotetramer. Requires pyridoxal 5'-phosphate as cofactor.

The protein resides in the cytoplasm. It carries out the reaction O-acetyl-L-homoserine + L-cysteine = L,L-cystathionine + acetate + H(+). The catalysed reaction is O-acetyl-L-homoserine + hydrogen sulfide = L-homocysteine + acetate. The protein operates within amino-acid biosynthesis; L-methionine biosynthesis via de novo pathway. Its function is as follows. Catalyzes the formation of L-cystathionine from O-acetyl-L-homoserine and L-cysteine. Cannot use O-succinyl-L-homoserine as substrate. Also exhibits O-acetylhomoserine thiolyase activity, catalyzing the synthesis of L-homocysteine from O-acetyl-L-homoserine and sulfide. This Bacillus subtilis (strain 168) protein is Cystathionine gamma-synthase/O-acetylhomoserine (thiol)-lyase (metI).